Consider the following 142-residue polypeptide: Large ribosomal subunit protein uL11 (142 aa).

It belongs to the universal ribosomal protein uL11 family. In terms of assembly, part of the ribosomal stalk of the 50S ribosomal subunit. Interacts with L10 and the large rRNA to form the base of the stalk. L10 forms an elongated spine to which L12 dimers bind in a sequential fashion forming a multimeric L10(L12)X complex. Post-translationally, one or more lysine residues are methylated.

Its function is as follows. Forms part of the ribosomal stalk which helps the ribosome interact with GTP-bound translation factors. The protein is Large ribosomal subunit protein uL11 of Beijerinckia indica subsp. indica (strain ATCC 9039 / DSM 1715 / NCIMB 8712).